The primary structure comprises 196 residues: Imidazole glycerol phosphate synthase subunit HisH (196 aa).

The Glutamine amidotransferase type-1 domain occupies 2–196; the sequence is NVVILDTGCA…AKLLKNFLEM (195 aa). Cys-77 (nucleophile) is an active-site residue. Residues His-178 and Glu-180 contribute to the active site.

In terms of assembly, heterodimer of HisH and HisF.

It is found in the cytoplasm. The catalysed reaction is 5-[(5-phospho-1-deoxy-D-ribulos-1-ylimino)methylamino]-1-(5-phospho-beta-D-ribosyl)imidazole-4-carboxamide + L-glutamine = D-erythro-1-(imidazol-4-yl)glycerol 3-phosphate + 5-amino-1-(5-phospho-beta-D-ribosyl)imidazole-4-carboxamide + L-glutamate + H(+). It carries out the reaction L-glutamine + H2O = L-glutamate + NH4(+). It participates in amino-acid biosynthesis; L-histidine biosynthesis; L-histidine from 5-phospho-alpha-D-ribose 1-diphosphate: step 5/9. Its function is as follows. IGPS catalyzes the conversion of PRFAR and glutamine to IGP, AICAR and glutamate. The HisH subunit catalyzes the hydrolysis of glutamine to glutamate and ammonia as part of the synthesis of IGP and AICAR. The resulting ammonia molecule is channeled to the active site of HisF. This chain is Imidazole glycerol phosphate synthase subunit HisH, found in Shigella flexneri.